We begin with the raw amino-acid sequence, 408 residues long: Histidine--tRNA ligase (408 aa).

This sequence belongs to the class-II aminoacyl-tRNA synthetase family.

It localises to the cytoplasm. It carries out the reaction tRNA(His) + L-histidine + ATP = L-histidyl-tRNA(His) + AMP + diphosphate + H(+). This chain is Histidine--tRNA ligase, found in Methanospirillum hungatei JF-1 (strain ATCC 27890 / DSM 864 / NBRC 100397 / JF-1).